We begin with the raw amino-acid sequence, 341 residues long: Inactive caspase-12 (341 aa).

The CARD domain occupies 1 to 92 (MADEKPSNGV…QLSSDISSDG (92 aa)). Residues Ser85 and Ser90 each carry the phosphoserine modification. Active-site residues include His172 and Cys220.

Belongs to the peptidase C14A family. Widely expressed, with highest levels in lung.

In terms of biological role, may function as a negative regulator of inflammatory responses and innate immunity. May reduce cytokine release in response to bacterial lipopolysaccharide during infection. Reduces activation of NF-kappa-B in response to TNF. May lack protease activity. This Homo sapiens (Human) protein is Inactive caspase-12 (CASP12).